The sequence spans 630 residues: Lysophospholipase 3 (630 aa).

An N-terminal signal peptide occupies residues 1-16 (MKALLSLLTAVAVATA). Residues 39–587 (SCPATRPSIR…KEYCWNGTVD (549 aa)) form the PLA2c domain. N-linked (GlcNAc...) asparagine glycans are attached at residues Asn-56, Asn-95, Asn-164, Asn-220, Asn-283, Asn-351, Asn-390, Asn-443, Asn-456, Asn-462, Asn-493, Asn-514, Asn-542, Asn-566, and Asn-583. Residue Asn-606 is the site of GPI-like-anchor amidated asparagine attachment. The propeptide at 607-630 (AAYTQGVTWLVGILAVGVAMGMTA) is removed in mature form.

It belongs to the lysophospholipase family. In terms of processing, the GPI-like anchor contains a phosphoceramide lipid group.

It is found in the cell membrane. It carries out the reaction a 1-acyl-sn-glycero-3-phosphocholine + H2O = sn-glycerol 3-phosphocholine + a fatty acid + H(+). Its function is as follows. Catalyzes the release of fatty acids from lysophospholipids. The protein is Lysophospholipase 3 (plb3) of Aspergillus fumigatus (strain CBS 144.89 / FGSC A1163 / CEA10) (Neosartorya fumigata).